The chain runs to 666 residues: MGESSEDIDQMFSTLLGEMDLLTQSLGVDTLPPPDPNPPRAEFNYSVGFKDLNESLNALEDQDLDALMADLVADISEAEQRTIQAQKESLQNQHHSASLQASIFSGAASLGYGTNVAATGISQYEDDLPPPPADPVLDLPLPPPPPEPLSQEEEEAQAKADKIKLALEKLKEAKVKKLVVKVHMNDNSTKSLMVDERQLARDVLDNLFEKTHCDCNVDWCLYEIYPELQIERFFEDHENVVEVLSDWTRDTENKILFLEKEEKYAVFKNPQNFYLDNRGKKESKETNEKMNAKNKESLLEESFCGTSIIVPELEGALYLKEDGKKSWKRRYFLLRASGIYYVPKGKTKTSRDLACFIQFENVNIYYGTQHKMKYKAPTDYCFVLKHPQIQKESQYIKYLCCDDTRTLNQWVMGIRIAKYGKTLYDNYQRAVAKAGLASRWTNLGTVNAAAPAQPSTGPKTGTTQPNGQIPQATHSVSAVLQEAQRHAETSKDKKPALGNHHDPAVPRAPHAPKSSLPPPPPVRRSSDTSGSPATPLKAKGTGGGGLPAPPDDFLPPPPPPPPLDDPELPPPPPDFMEPPPDFVPPPPPSYAGIAGSELPPPPPPPPAPAPAPVPDSARPPPAVAKRPPVPPKRQENPGHPGGAGGGEQDFMSDLMKALQKKRGNVS.

The residue at position 55 (Ser-55) is a Phosphoserine. The interval 122-155 (SQYEDDLPPPPADPVLDLPLPPPPPEPLSQEEEE) is disordered. Over residues 129–148 (PPPPADPVLDLPLPPPPPEP) the composition is skewed to pro residues. Positions 176 to 263 (KKLVVKVHMN…KILFLEKEEK (88 aa)) constitute a Ras-associating domain. The 110-residue stretch at 310 to 419 (VPELEGALYL…WVMGIRIAKY (110 aa)) folds into the PH domain. The segment at 448–666 (AAAPAQPSTG…ALQKKRGNVS (219 aa)) is disordered. A compositionally biased stretch (polar residues) spans 453-478 (QPSTGPKTGTTQPNGQIPQATHSVSA). The span at 483 to 504 (AQRHAETSKDKKPALGNHHDPA) shows a compositional bias: basic and acidic residues. Ser-526 is modified (phosphoserine). Thr-528 carries the phosphothreonine modification. Ser-531 bears the Phosphoserine mark. Pro residues-rich tracts occupy residues 547–589 (PAPP…PPPS) and 598–631 (LPPPPPPPPAPAPAPVPDSARPPPAVAKRPPVPP).

This sequence belongs to the MRL family. As to quaternary structure, interacts, through the N-terminal Pro-rich region, with the WW domain of APBB1. Interacts with RAP1A, PFN1, TLN1, VASP, VCL and ENAH. As to expression, widely expressed with high expression in thymus, spleen, lymph node, bone marrow and peripheral leukocytes.

The protein localises to the cell membrane. It is found in the cell projection. Its subcellular location is the lamellipodium. It localises to the cell junction. The protein resides in the focal adhesion. The protein localises to the cytoplasm. It is found in the cytoskeleton. Appears to function in the signal transduction from Ras activation to actin cytoskeletal remodeling. Suppresses insulin-induced promoter activities through AP1 and SRE. Mediates Rap1-induced adhesion. This chain is Amyloid beta A4 precursor protein-binding family B member 1-interacting protein (APBB1IP), found in Homo sapiens (Human).